The following is a 69-amino-acid chain: Pantinin-1 (69 aa).

Residues 1–23 (MKTQFVILMITVILMQMLVQTEG) form the signal peptide. A Valine amide modification is found at V37. The propeptide occupies 41 to 69 (GLNDRDQLDDLFDSDLSDADIKLLKEMFK).

Belongs to the non-disulfide-bridged peptide (NDBP) superfamily. Short antimicrobial peptide (group 4) family. Expressed by the venom gland.

Its subcellular location is the secreted. The protein localises to the target cell membrane. Functionally, amphipathic peptide that possesses relatively strong activities against Gram-positive bacteria and a fungus, but has very weak antimicrobial activities against Gram-negative bacteria. Also exhibits very low hemolytic activities against human erythrocytes (64 uM induce 21% of hemolysis). Minimal inhibitory concentration (MIC) are the following: 8 uM against S.aureus, 32 uM against B.magaterium, 32 uM against M.luteus, 28 uM against vancomycin-resistant Enterococci, 14 uM against methicillin-resistant S.aureus, 62 uM against E.coli, &gt;87 uM against P.putida, &gt;87 uM against K.oxytoca, 76 uM against E.cloacae, 72 uM against S.enterica and 16 uM against the fungus C.tropicalis. This is Pantinin-1 from Pandinus imperator (Emperor scorpion).